The sequence spans 925 residues: Centrosomal protein of 104 kDa (925 aa).

Residues glutamate 209 to leucine 289 are a coiled coil. 2 HEAT repeats span residues threonine 529–isoleucine 567 and glycine 604–histidine 640. The stretch at aspartate 677–lysine 725 forms a coiled coil. Residues proline 883 to arginine 925 form a disordered region. Over residues serine 915–arginine 925 the composition is skewed to polar residues.

In terms of assembly, interacts with CCP110 and CEP97. Interacts with ARMC9, TOGARAM1, CCDC66 and CSPP1.

It localises to the cell projection. It is found in the cilium. The protein localises to the cytoplasm. The protein resides in the cytoskeleton. Its subcellular location is the microtubule organizing center. It localises to the centrosome. It is found in the centriole. The protein localises to the spindle pole. Required for ciliogenesis and for structural integrity at the ciliary tip. This chain is Centrosomal protein of 104 kDa (CEP104), found in Homo sapiens (Human).